The following is a 188-amino-acid chain: Casparian strip membrane protein 1 (188 aa).

The Cytoplasmic segment spans residues 1–24; sequence MKAGALELGHASKTTKSGVNRGMS. A helical transmembrane segment spans residues 25–45; sequence ILDLFIRIIAIIATLGSAIAM. Over 46–72 the chain is Extracellular; it reads GTTNETLPFFTQFVRFKAKYSDLPTFT. N-linked (GlcNAc...) asparagine glycosylation is present at Asn-49. Residues 73 to 93 form a helical membrane-spanning segment; the sequence is FFVVANAIVSAYLVLSLGLSI. Residues 94 to 105 are Cytoplasmic-facing; that stretch reads YHIMRSRAQATR. A helical membrane pass occupies residues 106–126; that stretch reads IALIFFDAAMLGLLTGGASAS. Residues 127-159 are Extracellular-facing; sequence AAIVYLAHKGNRKTNWFPICQQYDSFCHRTSGS. The chain crosses the membrane as a helical span at residues 160–180; sequence LVGSFAGSVLIILLIFLSAIA. The Cytoplasmic portion of the chain corresponds to 181-188; the sequence is LSRQSLNH.

The protein belongs to the Casparian strip membrane proteins (CASP) family. Homodimer and heterodimers.

It is found in the cell membrane. Its function is as follows. Regulates membrane-cell wall junctions and localized cell wall deposition. Required for establishment of the Casparian strip membrane domain (CSD) and the subsequent formation of Casparian strips, a cell wall modification of the root endodermis that determines an apoplastic barrier between the intraorganismal apoplasm and the extraorganismal apoplasm and prevents lateral diffusion. The polypeptide is Casparian strip membrane protein 1 (Solanum tuberosum (Potato)).